We begin with the raw amino-acid sequence, 26 residues long: Citropin-2.1.3 (26 aa).

Expressed by the dorsal and submental skin glands.

The protein resides in the secreted. The sequence is that of Citropin-2.1.3 from Ranoidea citropa (Australian Blue Mountains tree frog).